Reading from the N-terminus, the 156-residue chain is Small ribosomal subunit protein uS7 (156 aa).

Belongs to the universal ribosomal protein uS7 family. Part of the 30S ribosomal subunit. Contacts proteins S9 and S11.

Functionally, one of the primary rRNA binding proteins, it binds directly to 16S rRNA where it nucleates assembly of the head domain of the 30S subunit. Is located at the subunit interface close to the decoding center, probably blocks exit of the E-site tRNA. This Anoxybacillus flavithermus (strain DSM 21510 / WK1) protein is Small ribosomal subunit protein uS7.